A 181-amino-acid polypeptide reads, in one-letter code: Ubiquitin-conjugating enzyme E2 19 (181 aa).

A compositionally biased stretch (polar residues) spans 1–10 (MATVNGYTGN). Positions 1-33 (MATVNGYTGNTPAATTPAATGSKQSAPPTKTVD) are disordered. A compositionally biased stretch (low complexity) spans 11-20 (TPAATTPAAT). The region spanning 36–181 (SVLKRLQSEL…VEKLYKPLNA (146 aa)) is the UBC core domain. Residue cysteine 120 is the Glycyl thioester intermediate of the active site.

The protein belongs to the ubiquitin-conjugating enzyme family. Interacts with OR. Binds to LOT1. As to expression, expressed in all tissues with cell division activities and in mature leaves.

Its subcellular location is the cytoplasm. It localises to the nucleus. The catalysed reaction is S-ubiquitinyl-[E1 ubiquitin-activating enzyme]-L-cysteine + [E2 ubiquitin-conjugating enzyme]-L-cysteine = [E1 ubiquitin-activating enzyme]-L-cysteine + S-ubiquitinyl-[E2 ubiquitin-conjugating enzyme]-L-cysteine.. Its pathway is protein modification; protein ubiquitination. Accepts the ubiquitin from the E1 complex and catalyzes its covalent attachment to other proteins. Part of the anaphase-promoting complex (APC). May have a key function during cell cycle and be involved in cyclin B1 degradation. Triggers OR ubiquitination that mediates its subsequent nuclear localization. Involved in the repression of early light-induced proteins (ELIPs, e.g. ELIP1 and ELIP2) expression, probably via OR nuclear relocalization. This is Ubiquitin-conjugating enzyme E2 19 from Arabidopsis thaliana (Mouse-ear cress).